Here is a 1212-residue protein sequence, read N- to C-terminus: DNA topoisomerase 1 (1212 aa).

In terms of domain architecture, Toprim spans 1 to 114 (MKLVVVESPA…DVERVTFNAI (114 aa)). Positions 7 and 80 each coordinate Mg(2+). The Topo IA-type catalytic domain maps to 130 to 556 (DNDLINAYLA…AFWHDFKPKT (427 aa)). The segment at 164 to 169 (SAGRVQ) is interaction with DNA. Catalysis depends on Tyr-293, which acts as the O-(5'-phospho-DNA)-tyrosine intermediate. The C4-type zinc finger occupies 592 to 619 (CPSCHTGRLALKGGRFGAFIACSNYPEC). Disordered stretches follow at residues 687–742 (GKGN…GVST), 758–937 (ALAG…KARA), and 1107–1212 (RAKM…EVAE). Composition is skewed to polar residues over residues 708–742 (ASSTGNVASSQSRMTGDETASSGNSRDSSAHGVST) and 770–782 (VSDNKGNNSSSTI). The segment covering 815-840 (ADNRLLSHRNGDIDSRAIPADHKDSS) has biased composition (basic and acidic residues). 2 stretches are compositionally biased toward polar residues: residues 881–890 (AITSDNSPSD) and 897–906 (STPSSATSSV). Residues 921 to 934 (KADEQAKEEEESRK) show a composition bias toward basic and acidic residues. The span at 1109–1140 (KMPKKKKTKKAAAKKPAAKKTTTKKAAPKKAT) shows a compositional bias: basic residues. The span at 1141 to 1151 (TKTATPKSATT) shows a compositional bias: low complexity. The span at 1167–1182 (PAKKAVAKKTTAKKPA) shows a compositional bias: basic residues. The segment covering 1183 to 1199 (SKSATKKAPSSKTTAAK) has biased composition (low complexity).

This sequence belongs to the type IA topoisomerase family. In terms of assembly, monomer. Mg(2+) serves as cofactor.

The enzyme catalyses ATP-independent breakage of single-stranded DNA, followed by passage and rejoining.. Releases the supercoiling and torsional tension of DNA, which is introduced during the DNA replication and transcription, by transiently cleaving and rejoining one strand of the DNA duplex. Introduces a single-strand break via transesterification at a target site in duplex DNA. The scissile phosphodiester is attacked by the catalytic tyrosine of the enzyme, resulting in the formation of a DNA-(5'-phosphotyrosyl)-enzyme intermediate and the expulsion of a 3'-OH DNA strand. The free DNA strand then undergoes passage around the unbroken strand, thus removing DNA supercoils. Finally, in the religation step, the DNA 3'-OH attacks the covalent intermediate to expel the active-site tyrosine and restore the DNA phosphodiester backbone. The sequence is that of DNA topoisomerase 1 from Zymomonas mobilis subsp. mobilis (strain ATCC 31821 / ZM4 / CP4).